The following is a 465-amino-acid chain: Glutamyl-tRNA reductase 2 (465 aa).

Substrate-binding positions include 62-65 (TCNR), S122, 127-129 (EGQ), and Q133. C63 acts as the Nucleophile in catalysis. An NADP(+)-binding site is contributed by 204 to 209 (GAGKMG).

Belongs to the glutamyl-tRNA reductase family.

It is found in the plastid. It localises to the chloroplast. It catalyses the reaction (S)-4-amino-5-oxopentanoate + tRNA(Glu) + NADP(+) = L-glutamyl-tRNA(Glu) + NADPH + H(+). It functions in the pathway porphyrin-containing compound metabolism; protoporphyrin-IX biosynthesis; 5-aminolevulinate from L-glutamyl-tRNA(Glu): step 1/2. In terms of biological role, catalyzes the NADPH-dependent reduction of glutamyl-tRNA(Glu) to glutamate 1-semialdehyde (GSA). This chain is Glutamyl-tRNA reductase 2 (HEMA2), found in Hordeum vulgare (Barley).